We begin with the raw amino-acid sequence, 697 residues long: Potassium-transporting ATPase ATP-binding subunit (697 aa).

The next 4 membrane-spanning stretches (helical) occupy residues 55–75, 82–102, 245–265, and 271–291; these read PIMF…FLPS, GWFN…ANFA, LTFI…YLGF, and VLVA…LSAI. Asp324 acts as the 4-aspartylphosphate intermediate in catalysis. Residues Asp361, Glu365, 393–400, and Lys412 each bind ATP; that span reads FKAETRMS. Mg(2+) is bound by residues Asp535 and Asp539. Transmembrane regions (helical) follow at residues 605 to 625, 633 to 653, and 677 to 697; these read FAII…LNIM, AILS…PLAM, and GGVI…GLFI.

This sequence belongs to the cation transport ATPase (P-type) (TC 3.A.3) family. Type IA subfamily. The system is composed of three essential subunits: KdpA, KdpB and KdpC.

It localises to the cell membrane. It catalyses the reaction K(+)(out) + ATP + H2O = K(+)(in) + ADP + phosphate + H(+). Its function is as follows. Part of the high-affinity ATP-driven potassium transport (or Kdp) system, which catalyzes the hydrolysis of ATP coupled with the electrogenic transport of potassium into the cytoplasm. This subunit is responsible for energy coupling to the transport system and for the release of the potassium ions to the cytoplasm. In Bacillus cereus (strain AH187), this protein is Potassium-transporting ATPase ATP-binding subunit.